Consider the following 624-residue polypeptide: Chaperone protein HtpG (624 aa).

The segment at 1–336 (MKGQETRGFQ…SSDLSLNVSR (336 aa)) is a; substrate-binding. The b stretch occupies residues 337-552 (EILQDSTVTR…ADEMSTQMAK (216 aa)). Positions 553-624 (LFAAAGQKVP…IRRMNQLLVS (72 aa)) are c.

It belongs to the heat shock protein 90 family. In terms of assembly, homodimer.

Its subcellular location is the cytoplasm. In terms of biological role, molecular chaperone. Has ATPase activity. This is Chaperone protein HtpG from Shigella dysenteriae serotype 1 (strain Sd197).